The chain runs to 378 residues: 4-hydroxy-3-methylbut-2-en-1-yl diphosphate synthase (flavodoxin) (378 aa).

Residues Cys268, Cys271, Cys303, and Glu310 each contribute to the [4Fe-4S] cluster site.

This sequence belongs to the IspG family. It depends on [4Fe-4S] cluster as a cofactor.

It catalyses the reaction (2E)-4-hydroxy-3-methylbut-2-enyl diphosphate + oxidized [flavodoxin] + H2O + 2 H(+) = 2-C-methyl-D-erythritol 2,4-cyclic diphosphate + reduced [flavodoxin]. The protein operates within isoprenoid biosynthesis; isopentenyl diphosphate biosynthesis via DXP pathway; isopentenyl diphosphate from 1-deoxy-D-xylulose 5-phosphate: step 5/6. Converts 2C-methyl-D-erythritol 2,4-cyclodiphosphate (ME-2,4cPP) into 1-hydroxy-2-methyl-2-(E)-butenyl 4-diphosphate. This chain is 4-hydroxy-3-methylbut-2-en-1-yl diphosphate synthase (flavodoxin), found in Corynebacterium efficiens (strain DSM 44549 / YS-314 / AJ 12310 / JCM 11189 / NBRC 100395).